Consider the following 454-residue polypeptide: Toxin CfTX-A (454 aa).

The first 18 residues, 1-18 (MDYAFIVFLVCFVSGTLG), serve as a signal peptide directing secretion. Positions 19 to 25 (NRRRAKR) are excised as a propeptide. A coiled-coil region spans residues 27-61 (VDEVTSGINQLVNQLNNVQQDTAAIKSALEELKTE).

The protein belongs to the jellyfish toxin family. Type II subfamily. As to quaternary structure, oligomer. Post-translationally, contains 2 disulfide bonds. In terms of tissue distribution, nematocytes.

The protein resides in the secreted. It localises to the nematocyst. Its subcellular location is the target cell membrane. Its function is as follows. The fraction containing this toxin and CfTX-A shows potent hemolytic activity. This fraction causes minor effects on the cardiovascular system of anesthetized rats (at 25 ug/kg), since it has no significant effects on heart rate but produces relatively small increases in mean arterial pressure. This is Toxin CfTX-A from Chironex fleckeri (Australian box jellyfish).